We begin with the raw amino-acid sequence, 376 residues long: 26S proteasome non-ATPase regulatory subunit 13 (376 aa).

Positions 171–338 constitute a PCI domain; sequence SYYKDALRFL…KRVHMTWVQP (168 aa). At K298 the chain carries N6-acetyllysine.

It belongs to the proteasome subunit S11 family. In terms of assembly, component of the 19S proteasome regulatory particle complex. The 26S proteasome consists of a 20S core particle (CP) and two 19S regulatory subunits (RP). The regulatory particle is made of a lid composed of 9 subunits including PSMD13, a base containing 6 ATPases and few additional components.

Its function is as follows. Component of the 26S proteasome, a multiprotein complex involved in the ATP-dependent degradation of ubiquitinated proteins. This complex plays a key role in the maintenance of protein homeostasis by removing misfolded or damaged proteins, which could impair cellular functions, and by removing proteins whose functions are no longer required. Therefore, the proteasome participates in numerous cellular processes, including cell cycle progression, apoptosis, or DNA damage repair. The chain is 26S proteasome non-ATPase regulatory subunit 13 (PSMD13) from Homo sapiens (Human).